The chain runs to 261 residues: Class II histocompatibility antigen, M alpha chain (261 aa).

Residues 1–26 (MEHEQKSGAVLLRLLRLLWLLPHSWA) form the signal peptide. Residues 27–124 (VLEASTPVLW…KLEGQIPVSR (98 aa)) form an alpha-1 region. Over 27–231 (VLEASTPVLW…ALPSDLLENA (205 aa)) the chain is Lumenal. The N-linked (GlcNAc...) asparagine glycan is linked to Asn41. 2 disulfide bridges follow: Cys50–Cys105 and Cys147–Cys202. One can recognise an Ig-like C1-type domain in the interval 114 to 215 (PKLEGQIPVS…HEIDRYTAIA (102 aa)). Positions 125 to 217 (GLSVAEVFTL…IDRYTAIAYW (93 aa)) are alpha-2. A connecting peptide region spans residues 218–231 (VPQNALPSDLLENA). Residues 232–252 (LCGVAFALGVLGTIIGIVFFL) form a helical membrane-spanning segment. The Cytoplasmic segment spans residues 253–261 (CSQRPCSGD).

The protein belongs to the MHC class II family. Heterodimer of an alpha chain (DMA) and a beta chain (DMB). Interacts with MHCII; this interaction mediates rapid selection of high-affinity peptides.

Its subcellular location is the late endosome membrane. The protein localises to the lysosome membrane. Plays a critical role in catalyzing the release of class II-associated invariant chain peptide (CLIP) from newly synthesized MHC class II molecules and freeing the peptide binding site for acquisition of antigenic peptides. This chain is Class II histocompatibility antigen, M alpha chain (H2-DMa), found in Mus musculus (Mouse).